The following is a 478-amino-acid chain: Antiviral innate immune response effector IFIT1 (478 aa).

TPR repeat units follow at residues 52 to 85 (VGIH…MQKE), 95 to 128 (LVTW…CKKP), 139 to 174 (PEID…DHEN), 183 to 216 (ISAY…NPDN), 218 to 249 (YLKV…NMSS), and 251 to 284 (TYVF…TPTS). Tryptophan 147 contacts mRNA. Glycine 190 serves as a coordination point for RNA. RNA-binding residues include lysine 259, histidine 289, glutamine 290, and lysine 336. TPR repeat units lie at residues 305 to 339 (ATKG…KPTF), 340 to 373 (EVAH…KPVV), 378 to 412 (QDIH…EQTS), and 437 to 470 (LESL…AADF).

It belongs to the IFIT family. As to quaternary structure, component of an interferon-dependent multiprotein complex, at least composed of IFIT1, IFIT2 and IFIT3. Interacts (via TPR repeats 1-4) with RPL15. Interacts with STING1/MITA; could disrupt STING1 interaction with MAVS or TBK1, acting as a negative-feedback regulator of virus-triggered signaling. Interacts with EIF3E; this could be an alternative way to inhibit translation. Phosphorylated. In terms of processing, ISGylated.

The protein resides in the cytoplasm. Plays a key role in the innate immune response as part of an interferon-dependent multiprotein complex, recognizing and sequestering viral RNAs that lack host-specific 2'-O-methylation at their 5' cap. By distinguishing these RNAs from host mRNAs, inhibits their translation by competing with the translation initiation factor eIF4E. Could also prevent viral replication through its interaction with DNA replication origin-binding protein E1 of several viruses. Causes the translocation of E1 from the nucleus to the cytoplasm and can also inhibit its helicase activity in vitro. This chain is Antiviral innate immune response effector IFIT1, found in Macaca fascicularis (Crab-eating macaque).